Here is a 198-residue protein sequence, read N- to C-terminus: T-cell surface glycoprotein CD3 epsilon chain (198 aa).

Residues 1–21 form the signal peptide; sequence MQSGTRWRVLGLCLLSIGVWG. Residues 22–117 lie on the Extracellular side of the membrane; the sequence is QDGNEEMGSI…RVCENCMEMD (96 aa). An Ig-like domain is found at 37 to 107; sequence QVSISGTTVI…DASHHLYLKA (71 aa). Cysteines 49 and 89 form a disulfide. The chain crosses the membrane as a helical span at residues 118-138; it reads VMAVATIVIVDICITLGLLLL. Topologically, residues 139-198 are cytoplasmic; the sequence is VYYWSKNRKAKAKPVTRGAGAGGRQRGQNKERPPPVPNPDYEPIRKGQQDLYSGLNQRRI. Residues 152-198 form a disordered region; it reads PVTRGAGAGGRQRGQNKERPPPVPNPDYEPIRKGQQDLYSGLNQRRI. Positions 166–183 are NUMB-binding region; it reads QNKERPPPVPNPDYEPIR. The region spanning 169–196 is the ITAM domain; that stretch reads ERPPPVPNPDYEPIRKGQQDLYSGLNQR. Residues 170-177 are proline-rich sequence; that stretch reads RPPPVPNP. Phosphotyrosine is present on residues Tyr-179 and Tyr-190. The span at 188 to 198 shows a compositional bias: polar residues; the sequence is DLYSGLNQRRI.

The TCR-CD3 complex is composed of a CD3D/CD3E and a CD3G/CD3E heterodimers that preferentially associate with TCRalpha and TCRbeta, respectively, to form TCRalpha/CD3E/CD3G and TCRbeta/CD3G/CD3E trimers. In turn, the hexamer interacts with CD3Z homodimer to form the TCR-CD3 complex. Alternatively, TCRalpha and TCRbeta can be replaced by TCRgamma and TCRdelta. Interacts with CD6. Interacts (via Proline-rich sequence) with NCK1; the interaction is ligand dependent but independent of tyrosine kinase activation. Phosphorylated on Tyr residues after T-cell receptor triggering by LCK in association with CD4/CD8.

It localises to the cell membrane. Part of the TCR-CD3 complex present on T-lymphocyte cell surface that plays an essential role in adaptive immune response. When antigen presenting cells (APCs) activate T-cell receptor (TCR), TCR-mediated signals are transmitted across the cell membrane by the CD3 chains CD3D, CD3E, CD3G and CD3Z. All CD3 chains contain immunoreceptor tyrosine-based activation motifs (ITAMs) in their cytoplasmic domain. Upon TCR engagement, these motifs become phosphorylated by Src family protein tyrosine kinases LCK and FYN, resulting in the activation of downstream signaling pathways. In addition of this role of signal transduction in T-cell activation, CD3E plays an essential role in correct T-cell development. Also participates in internalization and cell surface down-regulation of TCR-CD3 complexes via endocytosis sequences present in CD3E cytosolic region. In addition to its role as a TCR coreceptor, it serves as a receptor for ITPRIPL1. Ligand recognition inhibits T-cell activation by promoting interaction with NCK1, which prevents CD3E-ZAP70 interaction and blocks the ERK-NFkB signaling cascade and calcium influx. The polypeptide is T-cell surface glycoprotein CD3 epsilon chain (CD3E) (Macaca fascicularis (Crab-eating macaque)).